We begin with the raw amino-acid sequence, 303 residues long: Ornithine carbamoyltransferase (303 aa).

Carbamoyl phosphate is bound by residues 53–56, Q80, R104, and 131–134; these read STRT and HPCQ. L-ornithine-binding positions include N162, D222, and 226–227; that span reads SM. Residues 261-262 and R289 contribute to the carbamoyl phosphate site; that span reads CL.

The protein belongs to the aspartate/ornithine carbamoyltransferase superfamily. OTCase family.

It localises to the cytoplasm. The catalysed reaction is carbamoyl phosphate + L-ornithine = L-citrulline + phosphate + H(+). Its pathway is amino-acid biosynthesis; L-arginine biosynthesis; L-arginine from L-ornithine and carbamoyl phosphate: step 1/3. Its function is as follows. Reversibly catalyzes the transfer of the carbamoyl group from carbamoyl phosphate (CP) to the N(epsilon) atom of ornithine (ORN) to produce L-citrulline. In Mesorhizobium japonicum (strain LMG 29417 / CECT 9101 / MAFF 303099) (Mesorhizobium loti (strain MAFF 303099)), this protein is Ornithine carbamoyltransferase.